Consider the following 504-residue polypeptide: ATP synthase subunit alpha (504 aa).

ATP is bound at residue 171–178; it reads GDRQTGKT.

It belongs to the ATPase alpha/beta chains family. In terms of assembly, F-type ATPases have 2 components, CF(1) - the catalytic core - and CF(0) - the membrane proton channel. CF(1) has five subunits: alpha(3), beta(3), gamma(1), delta(1), epsilon(1). CF(0) has three main subunits: a(1), b(2) and c(9-12). The alpha and beta chains form an alternating ring which encloses part of the gamma chain. CF(1) is attached to CF(0) by a central stalk formed by the gamma and epsilon chains, while a peripheral stalk is formed by the delta and b chains.

It is found in the cell inner membrane. It carries out the reaction ATP + H2O + 4 H(+)(in) = ADP + phosphate + 5 H(+)(out). Functionally, produces ATP from ADP in the presence of a proton gradient across the membrane. The alpha chain is a regulatory subunit. This Helicobacter hepaticus (strain ATCC 51449 / 3B1) protein is ATP synthase subunit alpha.